A 581-amino-acid polypeptide reads, in one-letter code: MYPEDSRVSGGVATVDFLEGTYDYAAPTPAPTPLYSHSTPGYYSAPLDAHGPPSDGSLQSLGSGPNSPLVFVPSSPHLSPFMHPPTHHYLETTSTPIYRSSVPSSQHSVSREDQCGTSDDSYSVGESGAGAGAAGFEMAKEMRFCAVCSDYASGYHYGVWSCEGCKAFFKRSIQGHNDYMCPATNQCTIDRNRRKSCQACRLRKCYEVGMMKGGVRKDRGRVLRRDKRRTGTSDRDKASKGLEHRTAPPQDRRKHISSSAGGGGGKSSVISMPPDQVLLLLRGAEPPMLCSRQKVNRPYTEVTVMTLLTSMADKELVHMIAWAKKLPGFLQLSLHDQVQLLESSWLEVLMIGLIWRSIHCPGKLIFAQDLILDRSEGDCVEGMAEIFDMLLATASRFRMLKLKPEEFVCLKAIILLNSGAFSFCTGTMEPLHDSAAVQNMLDTITDALIHHINQSGCSAQQQSRRQAQLLLLLSHIRHMSNKGMEHLYSMKCKNKVPLYDLLLEMLDAHRVHRPDRPAETWSQADREPLFTSRNSSSSSGGGGGGSSSAGSTSGPQVNLESPTGPGVLQLRVHPHPMKPTE.

The interval 1 to 144 (MYPEDSRVSG…GFEMAKEMRF (144 aa)) is modulating. Disordered regions lie at residues 45–66 (APLDAHGPPSDGSLQSLGSGPN) and 99–123 (RSSVPSSQHSVSREDQCGTSDDSYS). The span at 56–66 (GSLQSLGSGPN) shows a compositional bias: polar residues. Positions 142 to 217 (MRFCAVCSDY…VGMMKGGVRK (76 aa)) form a DNA-binding region, nuclear receptor. NR C4-type zinc fingers lie at residues 145–165 (CAVCSDYASGYHYGVWSCEGC) and 181–200 (CPATNQCTIDRNRRKSCQAC). The hinge stretch occupies residues 211–272 (MKGGVRKDRG…GGGKSSVISM (62 aa)). Positions 216-246 (RKDRGRVLRRDKRRTGTSDRDKASKGLEHRT) are enriched in basic and acidic residues. Residues 216–269 (RKDRGRVLRRDKRRTGTSDRDKASKGLEHRTAPPQDRRKHISSSAGGGGGKSSV) form a disordered region. The NR LBD domain occupies 273–509 (PPDQVLLLLR…DLLLEMLDAH (237 aa)). Over residues 514-528 (PDRPAETWSQADREP) the composition is skewed to basic and acidic residues. Residues 514 to 581 (PDRPAETWSQ…VHPHPMKPTE (68 aa)) are disordered. Residues 572 to 581 (VHPHPMKPTE) are compositionally biased toward basic residues.

This sequence belongs to the nuclear hormone receptor family. NR3 subfamily. In terms of assembly, binds DNA as a homodimer. Can form a heterodimer with ER-beta.

It is found in the nucleus. Its function is as follows. The steroid hormones and their receptors are involved in the regulation of eukaryotic gene expression and affect cellular proliferation and differentiation in target tissues. The polypeptide is Estrogen receptor (esr1) (Sparus aurata (Gilthead sea bream)).